A 205-amino-acid chain; its full sequence is Ribonuclease HII (205 aa).

The RNase H type-2 domain occupies 13-205 (TIVAGVDEVG…APVKYMLSMC (193 aa)). Residues aspartate 19, glutamate 20, and aspartate 114 each coordinate a divalent metal cation.

It belongs to the RNase HII family. Requires Mn(2+) as cofactor. It depends on Mg(2+) as a cofactor.

The protein resides in the cytoplasm. The enzyme catalyses Endonucleolytic cleavage to 5'-phosphomonoester.. Functionally, endonuclease that specifically degrades the RNA of RNA-DNA hybrids. The polypeptide is Ribonuclease HII (Blochmanniella floridana).